Consider the following 149-residue polypeptide: Large ribosomal subunit protein uL15 (149 aa).

Basic residues-rich tracts occupy residues methionine 1 to glycine 13 and arginine 21 to arginine 42. A disordered region spans residues methionine 1–asparagine 44.

This sequence belongs to the universal ribosomal protein uL15 family. As to quaternary structure, component of the large ribosomal subunit. Mature ribosomes consist of a small (40S) and a large (60S) subunit. The 40S subunit contains about 32 different proteins and 1 molecule of RNA (18S). The 60S subunit contains 45 different proteins and 3 molecules of RNA (25S, 5.8S and 5S).

The protein localises to the cytoplasm. Functionally, component of the ribosome, a large ribonucleoprotein complex responsible for the synthesis of proteins in the cell. The small ribosomal subunit (SSU) binds messenger RNAs (mRNAs) and translates the encoded message by selecting cognate aminoacyl-transfer RNA (tRNA) molecules. The large subunit (LSU) contains the ribosomal catalytic site termed the peptidyl transferase center (PTC), which catalyzes the formation of peptide bonds, thereby polymerizing the amino acids delivered by tRNAs into a polypeptide chain. The nascent polypeptides leave the ribosome through a tunnel in the LSU and interact with protein factors that function in enzymatic processing, targeting, and the membrane insertion of nascent chains at the exit of the ribosomal tunnel. This Candida albicans (strain SC5314 / ATCC MYA-2876) (Yeast) protein is Large ribosomal subunit protein uL15.